The primary structure comprises 376 residues: MAKLGPGQGLGCEAAVGLLAPSRKREYKACNKLTEGKRPLYAIGFNFLDFHYYEVFATVGGNRVTTYSCLKDGNFAILQAYIDEDKDESFYTLSWACDLDGTPLLVAAGSNGIIRVINCATEKLLKTFVGHGDSINEIRTQALKPSLIISASKDESVRLWNVHTGICILIFAGAGGHRNEVLSVDFHPSDIYRIASCGMDNTVKIWSMKEFWPYVEQSFTWTDLPSKFPTKYVQFPVLVAVVHSNYVDCTRWLGDFILSKSVDNEIVLWEPKTKEQSPGEGSIDILQKYPVPECDIWFIKFSCDFHFNQLAIGNREGKVFVWEVQSSPPVLTARLTNPQCKSAIRQTAVSFDGSTILACSEDGSIWRWDEVDHPKA.

WD repeat units lie at residues 85–127, 130–170, 176–216, 242–279, 291–332, and 339–376; these read DKDE…LLKT, GHGD…CILI, GHRN…PYVE, VHSNYVDCTRWLGDFILSKSVDNEIVLWEPKTKEQSPG, VPEC…PVLT, and QCKSAIRQTAVSFDGSTILACSEDGSIWRWDEVDHPKA.

The protein belongs to the WD repeat ESC family. Interacts with EZ1. Component of the polycomb repressive complex 2 (PRC2), composed of the core PRC2 components EMF2B, EZ1 and CLF. PRC2 methylates 'Lys-27' residues of histone H3 (H3K27me3), leading to transcriptional repression of the affected target gene. As to expression, widely expressed.

Functionally, polycomb group (PcG) protein. PcG proteins act by forming multiprotein complexes, which are required to maintain the transcriptionally repressive state of homeotic genes throughout development. PcG proteins are not required to initiate repression, but to maintain it during later stages of development. They act via the methylation of histones, rendering chromatin heritably changed in its expressibility. Involved in the regulation of seed endosperm development, grain filling and seed dormancy. FIE2-containing PcG complex in seed endosperm regulates the expression of various transcription factors by trimethylation on histone H3 'Lys-27' (H3K27me3) of target genes. Involved in the overall expression regulation of a large number of nutrient metabolism genes. Involved in the regulation of seed endosperm development. Involved in the regulation of vegetative development, particularly in stem cell maintenance in the root system, where it maintains the suppression of key differentiation regulators. This Oryza sativa subsp. japonica (Rice) protein is Polycomb group protein FIE1.